Here is a 66-residue protein sequence, read N- to C-terminus: Large ribosomal subunit protein bL35 (66 aa).

Belongs to the bacterial ribosomal protein bL35 family.

This is Large ribosomal subunit protein bL35 from Leptospira biflexa serovar Patoc (strain Patoc 1 / Ames).